A 495-amino-acid polypeptide reads, in one-letter code: Phenylalanine--tRNA ligase alpha subunit (495 aa).

Residues Thr338, 377 to 379 (QLE), and Tyr417 each bind L-phenylalanine. Glu419 is a Mg(2+) binding site. An L-phenylalanine-binding site is contributed by Phe442.

This sequence belongs to the class-II aminoacyl-tRNA synthetase family. Phe-tRNA synthetase alpha subunit type 2 subfamily. Tetramer of two alpha and two beta subunits. Mg(2+) is required as a cofactor.

Its subcellular location is the cytoplasm. It catalyses the reaction tRNA(Phe) + L-phenylalanine + ATP = L-phenylalanyl-tRNA(Phe) + AMP + diphosphate + H(+). This Methanosarcina mazei (strain ATCC BAA-159 / DSM 3647 / Goe1 / Go1 / JCM 11833 / OCM 88) (Methanosarcina frisia) protein is Phenylalanine--tRNA ligase alpha subunit.